An 839-amino-acid chain; its full sequence is Protein translocase subunit SecA (839 aa).

Residues Gln86, 104 to 108 (GEGKT), and Asp493 each bind ATP. Positions 794–839 (GIDMDNLQTSGPSDRPDPETSGDADPKNRAQRRAQEQERKRQNKKQ) are disordered. Basic and acidic residues predominate over residues 807-833 (DRPDPETSGDADPKNRAQRRAQEQERK).

Belongs to the SecA family. Monomer and homodimer. Part of the essential Sec protein translocation apparatus which comprises SecA, SecYEG and auxiliary proteins SecDF. Other proteins may also be involved.

Its subcellular location is the cell membrane. It localises to the cytoplasm. The catalysed reaction is ATP + H2O + cellular proteinSide 1 = ADP + phosphate + cellular proteinSide 2.. Part of the Sec protein translocase complex. Interacts with the SecYEG preprotein conducting channel. Has a central role in coupling the hydrolysis of ATP to the transfer of proteins into and across the cell membrane, serving as an ATP-driven molecular motor driving the stepwise translocation of polypeptide chains across the membrane. This Brevibacillus brevis (strain 47 / JCM 6285 / NBRC 100599) protein is Protein translocase subunit SecA.